The chain runs to 292 residues: Geranyl diphosphate 2-C-methyltransferase (292 aa).

It belongs to the geranyl diphosphate 2-C-methyltransferase family. Mg(2+) serves as cofactor.

It carries out the reaction (2E)-geranyl diphosphate + S-adenosyl-L-methionine = (E)-2-methylgeranyl diphosphate + S-adenosyl-L-homocysteine + H(+). Functionally, catalyzes the SAM-dependent methylation of geranyl diphosphate (GPP) to yield (E)-2-methylgeranyl diphosphate (2-MeGPP). This chain is Geranyl diphosphate 2-C-methyltransferase, found in Streptomyces coelicolor (strain ATCC BAA-471 / A3(2) / M145).